Here is a 407-residue protein sequence, read N- to C-terminus: Patatin-like protein 2 (407 aa).

In terms of domain architecture, PNPLA spans 22-228 (LSIDGGGIRG…AANNPALLAI (207 aa)). The short motif at 26 to 31 (GGGIRG) is the GXGXXG element. Positions 64–68 (GTSTG) match the GXSXG motif. S66 (nucleophile) is an active-site residue. The active-site Proton acceptor is D215. Positions 215–217 (DGG) match the DGA/G motif. At S398 the chain carries Phosphoserine.

Belongs to the patatin family. Expressed specifically in roots.

The protein resides in the cytoplasm. Functionally, possesses non-specific lipolytic acyl hydrolase (LAH) activity. Catalyzes the hydrolysis of the galactolipids monogalactosyldiacylglycerol (MGDG) and digalactosyldiacylglycerol (DGDG), and less efficiently the phoshpolipids phosphatidylcholine (PC), phosphatidylethanolamine (PE), phosphatidylglycerol (PG), phosphatidic acid (PA), phosphatidylserine (PS) and phosphatidylinositol (PI). Favors the release of fatty acid at the sn-1 position for PC or PE and the sn-2 position for PG, PA, PS and PI. Negatively affects disease resistance to the necrotic fungal pathogen Botrytis cinerea and the avirulent bacteria Pseudomonas syringae by promoting cell death and reducing the efficiency of the hypersensitive response, respectively. However, PLP2 contributes to resistance to cucumber mosaic virus (CMV), an obligate parasite inducing hypersensitive response. May negatively regulate oxylipin production, possibly via participating in membrane repair that includes removal of oxidatively modified lipids. This chain is Patatin-like protein 2 (PLP2), found in Arabidopsis thaliana (Mouse-ear cress).